An 84-amino-acid polypeptide reads, in one-letter code: Cell division topological specificity factor (84 aa).

This sequence belongs to the MinE family.

Prevents the cell division inhibition by proteins MinC and MinD at internal division sites while permitting inhibition at polar sites. This ensures cell division at the proper site by restricting the formation of a division septum at the midpoint of the long axis of the cell. This is Cell division topological specificity factor from Desulfotalea psychrophila (strain LSv54 / DSM 12343).